Here is a 799-residue protein sequence, read N- to C-terminus: Phosphate transporter PHO1-1 (799 aa).

Over 1–406 (MVKFSKQFEG…TQRKESHTVT (406 aa)) the chain is Cytoplasmic. The 353-residue stretch at 2-354 (VKFSKQFEGQ…GKQVLSVYLR (353 aa)) folds into the SPX domain. The tract at residues 170–243 (SLSGHHRAAA…GSLSRQSLGR (74 aa)) is disordered. Residues 180–193 (GDDPSISSSSATSG) are compositionally biased toward low complexity. A compositionally biased stretch (basic and acidic residues) spans 210-222 (ESQHETAVMRDPE). The span at 234-243 (GSLSRQSLGR) shows a compositional bias: polar residues. The helical transmembrane segment at 407-427 (FFIGLMTGCFVALFLGYCIMA) threads the bilayer. Residues 428–447 (HIAGMYTQRRDSIYMETVYP) lie on the Extracellular side of the membrane. Residues 448–468 (VFSMFSLMFLHLFMYGCNMVA) form a helical membrane-spanning segment. Residues 469 to 492 (WRKARINYSFIFEFAAGRELKYRD) are Cytoplasmic-facing. Residues 493 to 513 (VFLVCTASMAVIVGVMFAHLS) form a helical membrane-spanning segment. Residues 514 to 522 (LAVRGFHAQ) are Extracellular-facing. The chain crosses the membrane as a helical span at residues 523–543 (AIPGFLLLGFLLLLFCPFNMV). Residues 544–672 (YRSTRFQFLR…AYEKDRSLGS (129 aa)) are Cytoplasmic-facing. Residues 608–799 (INTKHIRDLA…LPFHEADEED (192 aa)) form the EXS domain. The helical transmembrane segment at 673 to 693 (LSLLVIVSSSATMYQLYWDFV) threads the bilayer. Residues 694 to 718 (KDWGLLQPNSKNPWLRNDLILKSKS) are Extracellular-facing. The chain crosses the membrane as a helical span at residues 719–739 (IYYLSMGLNLVLRLAWLQTVI). Topologically, residues 740-799 (HPNFGSLDSRVTSFFLAALEVIRRGHWNFYRLENEHLNNAGKFRAVKTVPLPFHEADEED) are cytoplasmic.

This sequence belongs to the SYG1 (TC 2.A.94) family. As to expression, expressed in roots and flowers.

It localises to the cell membrane. In terms of biological role, may transport inorganic phosphate (Pi). The protein is Phosphate transporter PHO1-1 (PHO1-1) of Oryza sativa subsp. japonica (Rice).